Reading from the N-terminus, the 250-residue chain is Acetylglutamate kinase (250 aa).

Residues 41-42 (GG), R63, and N156 contribute to the substrate site.

The protein belongs to the acetylglutamate kinase family. ArgB subfamily.

It localises to the cytoplasm. The enzyme catalyses N-acetyl-L-glutamate + ATP = N-acetyl-L-glutamyl 5-phosphate + ADP. It functions in the pathway amino-acid biosynthesis; L-arginine biosynthesis; N(2)-acetyl-L-ornithine from L-glutamate: step 2/4. Its function is as follows. Catalyzes the ATP-dependent phosphorylation of N-acetyl-L-glutamate. This Listeria welshimeri serovar 6b (strain ATCC 35897 / DSM 20650 / CCUG 15529 / CIP 8149 / NCTC 11857 / SLCC 5334 / V8) protein is Acetylglutamate kinase.